The sequence spans 74 residues: Small cysteine-rich protein 8 (74 aa).

The signal sequence occupies residues 1–21 (MAAKFHLCLLLIILGTITVQG). Residues 22-31 (ARHPGKPHFF) constitute a propeptide that is removed on maturation.

This sequence belongs to the Cnidaria small cysteine-rich protein (SCRiP) family. beta subfamily. Contains 4 disulfide bonds.

The protein localises to the secreted. Its subcellular location is the nematocyst. In terms of biological role, induces neurotoxic symptoms on zebrafish. Has also been claimed to be implied in calcification, but tests on homolog proteins suggest that proteins of this family have a neurotoxic function and not a calcification function. The chain is Small cysteine-rich protein 8 from Orbicella faveolata (Mountainous star coral).